The sequence spans 164 residues: Phosphopantetheine adenylyltransferase (164 aa).

Residue threonine 10 coordinates substrate. ATP-binding positions include 10–11 and histidine 18; that span reads TF. 3 residues coordinate substrate: lysine 42, leucine 74, and arginine 88. Residues 89-91, glutamate 99, and 124-130 contribute to the ATP site; these read GIR and YAFVSST.

It belongs to the bacterial CoaD family. In terms of assembly, homohexamer. It depends on Mg(2+) as a cofactor.

The protein localises to the cytoplasm. It carries out the reaction (R)-4'-phosphopantetheine + ATP + H(+) = 3'-dephospho-CoA + diphosphate. It participates in cofactor biosynthesis; coenzyme A biosynthesis; CoA from (R)-pantothenate: step 4/5. In terms of biological role, reversibly transfers an adenylyl group from ATP to 4'-phosphopantetheine, yielding dephospho-CoA (dPCoA) and pyrophosphate. This chain is Phosphopantetheine adenylyltransferase, found in Tolumonas auensis (strain DSM 9187 / NBRC 110442 / TA 4).